Here is a 133-residue protein sequence, read N- to C-terminus: Putative biopolymer transport protein ExbD-like 1 (133 aa).

Over 1-15 the chain is Cytoplasmic; the sequence is MNYDNYWDEDKPELN. A helical membrane pass occupies residues 16–32; the sequence is ITPLVDVMLVLLAILMV. Topologically, residues 33–133 are periplasmic; the sequence is TTPTLTYKEE…FLKVSLITSP (101 aa).

This sequence belongs to the ExbD/TolR family.

Its subcellular location is the cell inner membrane. The chain is Putative biopolymer transport protein ExbD-like 1 from Helicobacter pylori (strain ATCC 700392 / 26695) (Campylobacter pylori).